Here is a 494-residue protein sequence, read N- to C-terminus: Tetracenomycin biosynthesis bifunctional cyclase/O-methyl transferase TcmN (494 aa).

Residues 11-140 (VNAPFELVWD…TTTRANMERI (130 aa)) form a polyketide cyclase region. S67 (proton acceptor; for cyclase activity) is an active-site residue. Active-site proton donor; for cyclase activity residues include R69 and R82. Positions 169–494 (LLLAASGRLA…TWTTLECRPV (326 aa)) are methyltransferase. Residues D358 and 384–386 (GDF) contribute to the S-adenosyl-L-methionine site. H405 serves as the catalytic Proton acceptor; for methyltransferase activity.

The protein in the C-terminal section; belongs to the class I-like SAM-binding methyltransferase superfamily. Cation-independent O-methyltransferase family. In terms of assembly, the tetracenomycin polyketide synthase (TCM PKS) is composed of a ketosynthase complex (TcmKL), an acyl carrier protein (TcmM), a cyclase (TcmN) and a probable second cyclase (TcmJ). TcmN is a homodimer in solution.

The catalysed reaction is 10 malonyl-CoA + 8 H(+) = tetracenomycin F2 + 10 CO2 + 10 CoA + 2 H2O. Its pathway is antibiotic biosynthesis; tetracenomycin C biosynthesis. Its function is as follows. Involved in the biosynthesis of tetracenomycin C (TCM C). Part of a type II polyketide synthase (PKS) that catalyzes the synthesis of tetracenomycin F2 (TCM F2), a precursor of TCM C, from malonyl-CoA. The TcmN N-terminal domain, when coupled with the other components of the PKS, catalyzes the cyclization and aromatization of the linear polyketide intermediate. Catalyzes the cyclization of the first and second rings. In addition, the C-terminal domain acts as a methyltransferase. It catalyzes the specific O-methylation of tetracenomycin D3 (TCM D3) to TCM B3, using S-adenosyl-L-methionine as the methyl donor. In Streptomyces glaucescens, this protein is Tetracenomycin biosynthesis bifunctional cyclase/O-methyl transferase TcmN.